The primary structure comprises 952 residues: Bromodomain testis-specific protein (952 aa).

The 107-residue stretch at 26-132 (RLTNQLQFLQ…KLFMQKLSQM (107 aa)) folds into the Bromo 1 domain. The span at 141 to 150 (GKERMKKDIQ) shows a compositional bias: basic and acidic residues. A disordered region spans residues 141 to 168 (GKERMKKDIQQKTAVSSAKEQTPSKSAE). Positions 151–167 (QKTAVSSAKEQTPSKSA) are enriched in polar residues. At Ser186 the chain carries Phosphoserine. The Nuclear localization signal motif lies at 208 to 219 (KGVKRRADTTTP). Residues 209–257 (GVKRRADTTTPTTSSAKASSESPPPLREAKPANAPVKENTVKSVLPDSQ) form a disordered region. Residues 216–229 (TTTPTTSSAKASSE) show a composition bias toward low complexity. Positions 266-375 (VKVTEQLKHC…DVFEMHFAKI (110 aa)) constitute a Bromo 2 domain. Disordered regions lie at residues 392–420 (SAKALSRESSSEASSGDCSSEDSEDERVQ), 442–504 (VPLR…NAKP), 607–746 (QLNC…GCQV), and 850–930 (KHLE…RREA). The stretch at 417–442 (ERVQRLAKLQEQLNAVHQQLQVLSQV) forms a coiled coil. The span at 445–463 (RKLKKKNEKSKRAPKRKKV) shows a compositional bias: basic residues. The region spanning 495–577 (KLEEEDNAKP…ACLRKRSLKP (83 aa)) is the NET domain. Residues 610-619 (CRKRQTKRPA) show a composition bias toward basic residues. A compositionally biased stretch (pro residues) spans 625–638 (PRPPLPPPPPPPPE). Positions 646–681 (SDSSSSSSSSGSGSSSSSSSSSGSGSSSSDSSSSDS) are enriched in low complexity. Polar residues predominate over residues 718–729 (SAETALVQQSTG). The stretch at 837–936 (EKEVKARTQE…RREAMAGTID (100 aa)) forms a coiled coil. Residues 850–867 (KHLEHSAKDPKVSQESQR) show a composition bias toward basic and acidic residues. Polar residues predominate over residues 874–883 (TPESSSNKVQ). Residues 893–902 (EQQQLPSPSE) are compositionally biased toward low complexity. Positions 911-930 (LLKDRNLAREKEQERRRREA) are enriched in basic and acidic residues.

Belongs to the BET family. Interacts with the acetylated N-terminus of histone H1, H2, H3 and H4. Interacts with P-TEFb components CDK9 and CCNT1/cyclin-T1. Interacts with mRNA splicing machinery proteins SRSF2, DDX5, HNRNPK and TARDBP. Interacts with SMARCE1. Ubiquitinated in a SPOP-dependent manner, leading to proteasomal degradation.

It localises to the nucleus. Functionally, testis-specific chromatin protein that specifically binds histone H4 acetylated at 'Lys-5' and 'Lys-8' (H4K5ac and H4K8ac, respectively) and plays a key role in spermatogenesis. Required in late pachytene spermatocytes: plays a role in meiotic and post-meiotic cells by binding to acetylated histones at the promoter of specific meiotic and post-meiotic genes, facilitating their activation at the appropriate time. In the post-meiotic phase of spermatogenesis, binds to hyperacetylated histones and participates in their general removal from DNA. Also recognizes and binds a subset of butyrylated histones: able to bind histone H4 butyrylated at 'Lys-8' (H4K8ac), while it is not able to bind H4 butyrylated at 'Lys-5' (H4K5ac). Also acts as a component of the splicing machinery in pachytene spermatocytes and round spermatids and participates in 3'-UTR truncation of specific mRNAs in post-meiotic spermatids. Required for chromocenter organization, a structure comprised of peri-centromeric heterochromatin. This Rattus norvegicus (Rat) protein is Bromodomain testis-specific protein (Brdt).